We begin with the raw amino-acid sequence, 225 residues long: NAD(P)H-quinone oxidoreductase subunit K, chloroplastic (225 aa).

4 residues coordinate [4Fe-4S] cluster: C43, C44, C108, and C139.

The protein belongs to the complex I 20 kDa subunit family. In terms of assembly, NDH is composed of at least 16 different subunits, 5 of which are encoded in the nucleus. Requires [4Fe-4S] cluster as cofactor.

The protein localises to the plastid. It localises to the chloroplast thylakoid membrane. It catalyses the reaction a plastoquinone + NADH + (n+1) H(+)(in) = a plastoquinol + NAD(+) + n H(+)(out). It carries out the reaction a plastoquinone + NADPH + (n+1) H(+)(in) = a plastoquinol + NADP(+) + n H(+)(out). NDH shuttles electrons from NAD(P)H:plastoquinone, via FMN and iron-sulfur (Fe-S) centers, to quinones in the photosynthetic chain and possibly in a chloroplast respiratory chain. The immediate electron acceptor for the enzyme in this species is believed to be plastoquinone. Couples the redox reaction to proton translocation, and thus conserves the redox energy in a proton gradient. The polypeptide is NAD(P)H-quinone oxidoreductase subunit K, chloroplastic (Nicotiana tabacum (Common tobacco)).